The primary structure comprises 133 residues: Large ribosomal subunit protein uL14 (133 aa).

The protein belongs to the universal ribosomal protein uL14 family. In terms of assembly, part of the 50S ribosomal subunit. Forms a cluster with proteins L3 and L19. In the 70S ribosome, L14 and L19 interact and together make contacts with the 16S rRNA in bridges B5 and B8.

Functionally, binds to 23S rRNA. Forms part of two intersubunit bridges in the 70S ribosome. This chain is Large ribosomal subunit protein uL14, found in Gloeobacter violaceus (strain ATCC 29082 / PCC 7421).